The sequence spans 202 residues: Adenosylcobalamin/alpha-ribazole phosphatase (202 aa).

The Tele-phosphohistidine intermediate role is filled by His-8. The active-site Proton donor/acceptor is Glu-81.

This sequence belongs to the phosphoglycerate mutase family. Monomer.

The enzyme catalyses adenosylcob(III)alamin 5'-phosphate + H2O = adenosylcob(III)alamin + phosphate. It carries out the reaction alpha-ribazole 5'-phosphate + H2O = alpha-ribazole + phosphate. It functions in the pathway nucleoside biosynthesis; alpha-ribazole biosynthesis; alpha-ribazole from 5,6-dimethylbenzimidazole: step 2/2. In terms of biological role, catalyzes the conversion of adenosylcobalamin 5'-phosphate to adenosylcobalamin (vitamin B12); involved in the assembly of the nucleotide loop of cobalamin. Also catalyzes the hydrolysis of the phospho group from alpha-ribazole 5'-phosphate to form alpha-ribazole. In Salmonella typhimurium (strain LT2 / SGSC1412 / ATCC 700720), this protein is Adenosylcobalamin/alpha-ribazole phosphatase (cobC).